Consider the following 274-residue polypeptide: Large ribosomal subunit protein uL2 (274 aa).

Disordered regions lie at residues 37–59 and 222–262; these read KAKNGGRNNNGRITTRHKGGGHK and GAAM…RTNK. The span at 50 to 59 shows a compositional bias: basic residues; it reads TTRHKGGGHK.

This sequence belongs to the universal ribosomal protein uL2 family. Part of the 50S ribosomal subunit. Forms a bridge to the 30S subunit in the 70S ribosome.

Functionally, one of the primary rRNA binding proteins. Required for association of the 30S and 50S subunits to form the 70S ribosome, for tRNA binding and peptide bond formation. It has been suggested to have peptidyltransferase activity; this is somewhat controversial. Makes several contacts with the 16S rRNA in the 70S ribosome. This chain is Large ribosomal subunit protein uL2, found in Alcanivorax borkumensis (strain ATCC 700651 / DSM 11573 / NCIMB 13689 / SK2).